Consider the following 64-residue polypeptide: Alpha-conotoxin-like Lp1.8 (64 aa).

The N-terminal stretch at Met-1 to Ser-21 is a signal peptide. The propeptide occupies Phe-22 to Arg-41. Intrachain disulfides connect Cys-47/Cys-53 and Cys-48/Cys-61. Positions Lys-49–Pro-51 are lacks the Ser-Xaa-Pro motif that is crucial for potent interaction with nAChR.

Belongs to the conotoxin A superfamily. In terms of tissue distribution, expressed by the venom duct.

The protein resides in the secreted. Its function is as follows. Alpha-conotoxins act on postsynaptic membranes, they bind to the nicotinic acetylcholine receptors (nAChR) and thus inhibit them. Has possibly a distinct nAChR binding mode from other alpha-conotoxins, due to a different three residue motif (Lys-Xaa-Pro instead of the conserved Ser-Xaa-Pro motif). The protein is Alpha-conotoxin-like Lp1.8 of Conus leopardus (Leopard cone).